The primary structure comprises 154 residues: Small ribosomal subunit protein uS15 (154 aa).

Residues 1–10 (MARMHSRRRG) show a composition bias toward basic residues. The segment at 1-32 (MARMHSRRRGSSGSDRPTADEPPEWSEVDEDA) is disordered. Residues 21–32 (EPPEWSEVDEDA) show a composition bias toward acidic residues.

Belongs to the universal ribosomal protein uS15 family. Part of the 30S ribosomal subunit.

The sequence is that of Small ribosomal subunit protein uS15 from Natronomonas pharaonis (strain ATCC 35678 / DSM 2160 / CIP 103997 / JCM 8858 / NBRC 14720 / NCIMB 2260 / Gabara) (Halobacterium pharaonis).